Reading from the N-terminus, the 337-residue chain is 1-aminocyclopropane-1-carboxylate deaminase (337 aa).

An N6-(pyridoxal phosphate)lysine modification is found at Lys-50. Ser-77 serves as the catalytic Nucleophile.

Belongs to the ACC deaminase/D-cysteine desulfhydrase family. As to quaternary structure, homotrimer. Requires pyridoxal 5'-phosphate as cofactor.

It catalyses the reaction 1-aminocyclopropane-1-carboxylate + H2O = 2-oxobutanoate + NH4(+). Its function is as follows. Catalyzes a cyclopropane ring-opening reaction, the irreversible conversion of 1-aminocyclopropane-1-carboxylate (ACC) to ammonia and alpha-ketobutyrate. Allows growth on ACC as a nitrogen source. This chain is 1-aminocyclopropane-1-carboxylate deaminase, found in Rhizobium radiobacter (Agrobacterium tumefaciens).